The sequence spans 1036 residues: Putative GPI-anchored protein pfl2 (1036 aa).

The signal sequence occupies residues 1–23; that stretch reads MKFFTASTLFLLAAQSLNSGVSA. 25 N-linked (GlcNAc...) asparagine glycosylation sites follow: asparagine 66, asparagine 97, asparagine 165, asparagine 201, asparagine 233, asparagine 259, asparagine 277, asparagine 296, asparagine 312, asparagine 331, asparagine 347, asparagine 363, asparagine 379, asparagine 395, asparagine 410, asparagine 429, asparagine 445, asparagine 461, asparagine 477, asparagine 493, asparagine 509, asparagine 524, asparagine 543, asparagine 559, and asparagine 573. 2 disordered regions span residues 88–130 and 147–183; these read SSSL…SSLA and SSLA…SLSS. Over residues 243–585 the composition is skewed to low complexity; the sequence is SSISSTVSSS…ITSSASGSTG (343 aa). The segment at 243 to 710 is disordered; sequence SSISSTVSSS…PLSNSTVAPT (468 aa). The span at 586–595 shows a compositional bias: polar residues; that stretch reads EFTNTNSGNG. The span at 597 to 630 shows a compositional bias: low complexity; that stretch reads VSGSVTTPTSTPLSNSTVAPTSTFTSSGFNTTSG. 9 N-linked (GlcNAc...) asparagine glycosylation sites follow: asparagine 611, asparagine 626, asparagine 642, asparagine 657, asparagine 673, asparagine 688, asparagine 704, asparagine 719, and asparagine 735. Residues 631–647 show a composition bias toward polar residues; sequence LPTSSASTPLSNSTVAP. Over residues 648–692 the composition is skewed to low complexity; it reads TSTFTSSGFNTTSGLPTSSASTPSSNSSIVPTSTFTSSGFNTTSG. The span at 693-709 shows a compositional bias: polar residues; sequence LPTSSASTPLSNSTVAP. 3 stretches are compositionally biased toward low complexity: residues 722 to 831, 838 to 862, and 885 to 906; these read SGLP…TTAS, PTAA…ATYT, and IPVN…SFTP. 2 disordered regions span residues 722–862 and 885–918; these read SGLP…ATYT and IPVN…SYSN. 7 N-linked (GlcNAc...) asparagine glycosylation sites follow: asparagine 918, asparagine 924, asparagine 930, asparagine 933, asparagine 939, asparagine 947, and asparagine 977. The disordered stretch occupies residues 978 to 1011; sequence TTATSGSDDDVKTASTSSSTSYTSSSSSSSSTTS. Over residues 990–1011 the composition is skewed to low complexity; the sequence is TASTSSSTSYTSSSSSSSSTTS. A lipid anchor (GPI-anchor amidated serine) is attached at serine 1011. The propeptide at 1012–1036 is removed in mature form; sequence AASSKASVSMGLNGLMIAAVILLVA.

The protein resides in the cell membrane. Functionally, may be involved in agglutination during conjugation or other aspects of colony formation. Induces flocculation when overexpressed. This Schizosaccharomyces pombe (strain 972 / ATCC 24843) (Fission yeast) protein is Putative GPI-anchored protein pfl2.